Reading from the N-terminus, the 421-residue chain is Tyrosine--tRNA ligase (421 aa).

Y38 serves as a coordination point for L-tyrosine. The short motif at P43–H52 is the 'HIGH' region element. L-tyrosine contacts are provided by Y169 and Q173. The short motif at K231 to S235 is the 'KMSKS' region element. K234 lines the ATP pocket. The 67-residue stretch at K353–I419 folds into the S4 RNA-binding domain.

This sequence belongs to the class-I aminoacyl-tRNA synthetase family. TyrS type 1 subfamily. Homodimer.

The protein localises to the cytoplasm. The enzyme catalyses tRNA(Tyr) + L-tyrosine + ATP = L-tyrosyl-tRNA(Tyr) + AMP + diphosphate + H(+). Catalyzes the attachment of tyrosine to tRNA(Tyr) in a two-step reaction: tyrosine is first activated by ATP to form Tyr-AMP and then transferred to the acceptor end of tRNA(Tyr). In Lactobacillus delbrueckii subsp. bulgaricus (strain ATCC 11842 / DSM 20081 / BCRC 10696 / JCM 1002 / NBRC 13953 / NCIMB 11778 / NCTC 12712 / WDCM 00102 / Lb 14), this protein is Tyrosine--tRNA ligase.